A 567-amino-acid chain; its full sequence is Proline--tRNA ligase (567 aa).

The protein belongs to the class-II aminoacyl-tRNA synthetase family. ProS type 1 subfamily. As to quaternary structure, homodimer.

It is found in the cytoplasm. The catalysed reaction is tRNA(Pro) + L-proline + ATP = L-prolyl-tRNA(Pro) + AMP + diphosphate. In terms of biological role, catalyzes the attachment of proline to tRNA(Pro) in a two-step reaction: proline is first activated by ATP to form Pro-AMP and then transferred to the acceptor end of tRNA(Pro). As ProRS can inadvertently accommodate and process non-cognate amino acids such as alanine and cysteine, to avoid such errors it has two additional distinct editing activities against alanine. One activity is designated as 'pretransfer' editing and involves the tRNA(Pro)-independent hydrolysis of activated Ala-AMP. The other activity is designated 'posttransfer' editing and involves deacylation of mischarged Ala-tRNA(Pro). The misacylated Cys-tRNA(Pro) is not edited by ProRS. This Staphylococcus aureus (strain Mu3 / ATCC 700698) protein is Proline--tRNA ligase.